We begin with the raw amino-acid sequence, 193 residues long: 7-methyl-GTP pyrophosphatase (193 aa).

The Proton acceptor role is filled by D70.

This sequence belongs to the Maf family. YceF subfamily. Requires a divalent metal cation as cofactor.

It localises to the cytoplasm. It carries out the reaction N(7)-methyl-GTP + H2O = N(7)-methyl-GMP + diphosphate + H(+). Nucleoside triphosphate pyrophosphatase that hydrolyzes 7-methyl-GTP (m(7)GTP). May have a dual role in cell division arrest and in preventing the incorporation of modified nucleotides into cellular nucleic acids. The polypeptide is 7-methyl-GTP pyrophosphatase (Aliivibrio fischeri (strain ATCC 700601 / ES114) (Vibrio fischeri)).